The chain runs to 623 residues: Chaperone protein DnaK (623 aa).

Position 197 is a phosphothreonine; by autocatalysis (Thr197). The segment covering 595–615 (AENMYKKDEPNTANDKKKKDD) has biased composition (basic and acidic residues). Residues 595-623 (AENMYKKDEPNTANDKKKKDDDVIDAEVE) are disordered.

It belongs to the heat shock protein 70 family.

Its function is as follows. Acts as a chaperone. The polypeptide is Chaperone protein DnaK (Campylobacter jejuni subsp. jejuni serotype O:6 (strain 81116 / NCTC 11828)).